The following is a 343-amino-acid chain: Glycogen biosynthesis protein GlgD (343 aa).

It belongs to the bacterial/plant glucose-1-phosphate adenylyltransferase family.

In terms of biological role, required for the synthesis of glycogen. The chain is Glycogen biosynthesis protein GlgD (glgD) from Geobacillus stearothermophilus (Bacillus stearothermophilus).